The primary structure comprises 413 residues: S-adenosylmethionine synthase (413 aa).

Position 15 (histidine 15) interacts with ATP. Aspartate 17 is a binding site for Mg(2+). Glutamate 43 is a binding site for K(+). Positions 56 and 100 each coordinate L-methionine. A flexible loop region spans residues 100–110; the sequence is QSPDISQGVND. Residues 171–173, 248–249, aspartate 257, 263–264, alanine 280, and lysine 284 each bind ATP; these read DGK, KF, and RK. Residue aspartate 257 coordinates L-methionine. Residue lysine 288 coordinates L-methionine.

Belongs to the AdoMet synthase family. As to quaternary structure, homotetramer; dimer of dimers. Mg(2+) serves as cofactor. Requires K(+) as cofactor.

It is found in the cytoplasm. The enzyme catalyses L-methionine + ATP + H2O = S-adenosyl-L-methionine + phosphate + diphosphate. It participates in amino-acid biosynthesis; S-adenosyl-L-methionine biosynthesis; S-adenosyl-L-methionine from L-methionine: step 1/1. In terms of biological role, catalyzes the formation of S-adenosylmethionine (AdoMet) from methionine and ATP. The overall synthetic reaction is composed of two sequential steps, AdoMet formation and the subsequent tripolyphosphate hydrolysis which occurs prior to release of AdoMet from the enzyme. The sequence is that of S-adenosylmethionine synthase from Prochlorococcus marinus (strain MIT 9301).